The sequence spans 343 residues: L-threonine 3-dehydrogenase (343 aa).

A Zn(2+)-binding site is contributed by C40. Active-site charge relay system residues include T42 and H45. Zn(2+) is bound by residues H65, E66, C95, C98, C101, and C109. Residues I177, D197, R202, 264-266 (LGI), and 288-289 (IY) each bind NAD(+).

Belongs to the zinc-containing alcohol dehydrogenase family. In terms of assembly, homotetramer. It depends on Zn(2+) as a cofactor.

It is found in the cytoplasm. The enzyme catalyses L-threonine + NAD(+) = (2S)-2-amino-3-oxobutanoate + NADH + H(+). Its pathway is amino-acid degradation; L-threonine degradation via oxydo-reductase pathway; glycine from L-threonine: step 1/2. Its function is as follows. Catalyzes the NAD(+)-dependent oxidation of L-threonine to 2-amino-3-ketobutyrate. This Aliivibrio salmonicida (strain LFI1238) (Vibrio salmonicida (strain LFI1238)) protein is L-threonine 3-dehydrogenase.